The primary structure comprises 365 residues: Tubulin-like protein CetZ (365 aa).

GTP contacts are provided by residues 10-14 (QCGGK), 103-105 (GTG), glutamate 136, asparagine 163, and asparagine 181.

This sequence belongs to the CetZ family.

It is found in the cytoplasm. Functionally, involved in cell shape control. This chain is Tubulin-like protein CetZ, found in Pyrococcus abyssi (strain GE5 / Orsay).